A 200-amino-acid polypeptide reads, in one-letter code: TATA-box-binding protein (200 aa).

2 repeat units span residues L25 to I101 and I115 to L192.

Belongs to the TBP family. In terms of assembly, belongs to the TFIID complex together with the TBP-associated factors (TAFs). Binds DNA as monomer.

Its subcellular location is the nucleus. Functionally, general transcription factor that functions at the core of the DNA-binding multiprotein factor TFIID. Binding of TFIID to the TATA box is the initial transcriptional step of the pre-initiation complex (PIC), playing a role in the activation of eukaryotic genes transcribed by RNA polymerase II. This Mesembryanthemum crystallinum (Common ice plant) protein is TATA-box-binding protein.